The following is a 206-amino-acid chain: Synaptosomal-associated protein 25 (206 aa).

Residues 1–20 (MAEDADMRNELEEMQRRADQ) are compositionally biased toward basic and acidic residues. The segment at 1-23 (MAEDADMRNELEEMQRRADQLAD) is disordered. The 63-residue stretch at 19-81 (DQLADESLES…KEAEKNLTDL (63 aa)) folds into the t-SNARE coiled-coil homology 1 domain. 4 S-palmitoyl cysteine lipidation sites follow: Cys85, Cys88, Cys90, and Cys92. Residue Thr138 is modified to Phosphothreonine. The region spanning 140–202 (DARENEMDEN…DEANQRATKM (63 aa)) is the t-SNARE coiled-coil homology 2 domain. Ser187 is subject to Phosphoserine.

Belongs to the SNAP-25 family. In terms of assembly, part of the SNARE core complex containing SNAP25, VAMP2 and STX1A. This complex binds CPLX1. Interacts with TRIM9, RIMS1 and SNAPIN. Binds STXBP6. Found in a ternary complex with STX1A and VAMP8. Associates with the BLOC-1 complex. Isoform 1 and isoform 2 interact with BLOC1S6. Interacts with alpha-synuclein/SNCA. In terms of processing, palmitoylated. Cys-85 appears to be the main site, and palmitoylation is required for membrane association.

The protein localises to the membrane. It is found in the synapse. It localises to the synaptosome. Its subcellular location is the cell membrane. Functionally, t-SNARE involved in the molecular regulation of neurotransmitter release. May play an important role in the synaptic function of specific neuronal systems. Associates with proteins involved in vesicle docking and membrane fusion. This is Synaptosomal-associated protein 25 (SNAP25) from Gallus gallus (Chicken).